Reading from the N-terminus, the 404-residue chain is Serine/threonine-protein phosphatase 2A regulatory subunit rsa-1 (404 aa).

Part of a complex consisting of a common heterodimeric core enzyme, composed of catalytic subunit let-92 and constant regulatory subunit paa-1, that associates with a variety of regulatory subunits which confer distinct properties to the holoenzyme. Interacts with rsa-2, spd-5 and tpxl-1.

The protein localises to the cytoplasm. It is found in the cytoskeleton. The protein resides in the microtubule organizing center. It localises to the centrosome. Regulatory subunit of phosphatase let-92 which recruits let-92/paa-1 complex to the centrosomes, thereby regulating microtubule outgrowth from centrosomes and mitotic spindle assembly ensuring the stability of kinetochore microtubules. The polypeptide is Serine/threonine-protein phosphatase 2A regulatory subunit rsa-1 (Caenorhabditis elegans).